The primary structure comprises 312 residues: Ribosomal RNA small subunit methyltransferase H (312 aa).

S-adenosyl-L-methionine-binding positions include 33-35 (GGH), aspartate 53, phenylalanine 80, aspartate 102, and glutamine 109.

It belongs to the methyltransferase superfamily. RsmH family.

The protein resides in the cytoplasm. The enzyme catalyses cytidine(1402) in 16S rRNA + S-adenosyl-L-methionine = N(4)-methylcytidine(1402) in 16S rRNA + S-adenosyl-L-homocysteine + H(+). Its function is as follows. Specifically methylates the N4 position of cytidine in position 1402 (C1402) of 16S rRNA. This chain is Ribosomal RNA small subunit methyltransferase H, found in Heliobacterium mobile (Heliobacillus mobilis).